Reading from the N-terminus, the 211-residue chain is Imidazole glycerol phosphate synthase subunit HisH (211 aa).

The region spanning 1-206 (MIGIIDYGRG…GKWVNEDATV (206 aa)) is the Glutamine amidotransferase type-1 domain. The active-site Nucleophile is the Cys-79. Residues His-181 and Glu-183 contribute to the active site.

In terms of assembly, heterodimer of HisH and HisF.

It is found in the cytoplasm. The enzyme catalyses 5-[(5-phospho-1-deoxy-D-ribulos-1-ylimino)methylamino]-1-(5-phospho-beta-D-ribosyl)imidazole-4-carboxamide + L-glutamine = D-erythro-1-(imidazol-4-yl)glycerol 3-phosphate + 5-amino-1-(5-phospho-beta-D-ribosyl)imidazole-4-carboxamide + L-glutamate + H(+). It catalyses the reaction L-glutamine + H2O = L-glutamate + NH4(+). The protein operates within amino-acid biosynthesis; L-histidine biosynthesis; L-histidine from 5-phospho-alpha-D-ribose 1-diphosphate: step 5/9. In terms of biological role, IGPS catalyzes the conversion of PRFAR and glutamine to IGP, AICAR and glutamate. The HisH subunit catalyzes the hydrolysis of glutamine to glutamate and ammonia as part of the synthesis of IGP and AICAR. The resulting ammonia molecule is channeled to the active site of HisF. This chain is Imidazole glycerol phosphate synthase subunit HisH, found in Desulfitobacterium hafniense (strain Y51).